The chain runs to 384 residues: MTAMEGASGSSFGIDTILSGAGSGSPGMMNGDFRSLGEARTTDFRSQATPSPCSEIDTVGTAPSSPISVTLEPPEPHLVTDGPQHHHHLHHSQQPPPPSAVPAQSLQPSPQQQPPPQPQSAAQQLGSAAAAPRTSTSSFLIKDILGDSKPLAACAPYSTSVSSPHHTPKQESNAAHESFRPKLEQEDGKTKLDKREDPQSDIKCHGTKEEGDREITSSRESPPVRAKKPRKARTAFSDHQLNQLERSFERQKYLSVQDRMDLAAALNLTDTQVKTWYQNRRTKWKRQTAVGLELLAEAGNYSALQRMFPSPYFYHPSLLGSMDSTTAAAAAAAMYSSMYRTPPAPHPQLQRPLVPRVLIHGLGPGGQPALNPLSNPIPGTPHPR.

Disordered stretches follow at residues 1–134 (MTAM…APRT), 154–235 (CAPY…ARTA), and 364–384 (PGGQ…PHPR). Low complexity-rich tracts occupy residues 101–110 (VPAQSLQPSP) and 119–134 (QSAA…APRT). Positions 157-175 (YSTSVSSPHHTPKQESNAA) are enriched in polar residues. Positions 177–217 (ESFRPKLEQEDGKTKLDKREDPQSDIKCHGTKEEGDREITS) are enriched in basic and acidic residues. A DNA-binding region (homeobox) is located at residues 229–288 (PRKARTAFSDHQLNQLERSFERQKYLSVQDRMDLAAALNLTDTQVKTWYQNRRTKWKRQT).

Belongs to the BAR homeobox family.

Its subcellular location is the nucleus. Its function is as follows. Potential regulator of neural basic helix-loop-helix genes. It may down-regulate expression of ASCL1 and, within the thalamus, up-regulate NGN2, thereby regulating distinct patterns of neuronal differentiation. This is BarH-like 2 homeobox protein (Barhl2) from Mus musculus (Mouse).